A 497-amino-acid chain; its full sequence is Serine/threonine-protein kinase 3 (497 aa).

An N-acetylmethionine modification is found at M1. The interval 1–20 is disordered; that stretch reads MEQPPASKSKLKKLSEDSLT. S15 carries the post-translational modification Phosphoserine. The Protein kinase domain occupies 27-278; sequence FDVLEKLGEG…ATQLLQHPFI (252 aa). ATP is bound by residues 33-41 and K56; that span reads LGEGSYGSV. The residue at position 117 (T117) is a Phosphothreonine; by PKB/AKT1. Residue D146 is the Proton acceptor of the active site. Residues N151 and D164 each contribute to the Mg(2+) site. T180 is modified (phosphothreonine; by autocatalysis). A coiled-coil region spans residues 287-328; that stretch reads LRDLIAEAMEIKAKRHEEQQRELEEEEENSDEDELDSHTMVK. Disordered stretches follow at residues 301 to 343 and 368 to 394; these read RHEE…TSTM and NSEE…SPQV. A compositionally biased stretch (acidic residues) spans 309–321; it reads LEEEEENSDEDEL. S316 carries the phosphoserine modification. Polar residues predominate over residues 326–343; the sequence is MVKTSSESVGTMRATSTM. Residue T336 is modified to Phosphothreonine. The stretch at 366–387 forms a coiled coil; the sequence is VINSEEEEEEEEEEEEDGTMKR. Acidic residues predominate over residues 369–382; that stretch reads SEEEEEEEEEEEED. The residue at position 384 (T384) is a Phosphothreonine. Position 390 is a phosphothreonine; by PKB/AKT1 (T390). Phosphoserine occurs at positions 391 and 450. Residues 443–490 form the SARAH domain; it reads FDFLKNLSLEELQMRLKALDPMMEREIEELHQRYSAKRQPILDAMDAK. Residues 448-479 adopt a coiled-coil conformation; the sequence is NLSLEELQMRLKALDPMMEREIEELHQRYSAK.

The protein belongs to the protein kinase superfamily. STE Ser/Thr protein kinase family. STE20 subfamily. As to quaternary structure, homodimer; mediated via the coiled-coil region. Interacts with NORE1, which inhibits autoactivation. Interacts with and stabilizes SAV1. Interacts with RAF1, which prevents dimerization and phosphorylation. Interacts with RASSF1. Interacts (via SARAH domain) with isoform 1 of NEK2. Interacts with ESR1 only in the presence of SAV1. Interacts with PKB/AKT1. Forms a tripartite complex with MOBKL1B and STK38. Interacts with RASSF2 (via SARAH domain). Interacts with DLG5 (via PDZ domain 3). Interacts with LATS1; this interaction is inhibited in the presence of DLG5. Interacts with MARK3 in the presence of DLG5. Interacts with RASSF5; this interaction inhibits STK3 autoactivation through heterodimerization. Interacts (when phosphorylated) with SLMAP (via FHA domain); the interaction associates STK3 with the STRIPAK complex. Mg(2+) is required as a cofactor. In terms of processing, autophosphorylated on two residues Thr-174 and Thr-180, leading to activation. Phosphorylation at Thr-117 and Thr-390 by PKB/AKT1, leads to inhibition of its: cleavage, kinase activity, autophosphorylation at Thr-180, binding to RASSF1 and nuclear translocation, and increase in its binding to RAF1. Phosphorylated at Ser-15 by PLK1, leading to activation. Post-translationally, proteolytically cleaved by caspase-3 during apoptosis. Proteolytic cleavage results in kinase activation and nuclear translocation of the truncated form (MST1/N). Ubiquitinated by TRIM69; leading to its redistribution to the perinuclear cytoskeleton.

It localises to the cytoplasm. Its subcellular location is the nucleus. The enzyme catalyses L-seryl-[protein] + ATP = O-phospho-L-seryl-[protein] + ADP + H(+). It catalyses the reaction L-threonyl-[protein] + ATP = O-phospho-L-threonyl-[protein] + ADP + H(+). With respect to regulation, inhibited by the C-terminal non-catalytic region. Activated by caspase-cleavage. Full activation also requires homodimerization and autophosphorylation of Thr-180, which are inhibited by the proto-oncogene product RAF1. Activated by RASSF1 which acts by preventing its dephosphorylation. When autophosphorylated at Thr-180, recruits STRIPAK complex and promotes PP2A-mediated dephosphorylation and inactivation of STK3. In terms of biological role, stress-activated, pro-apoptotic kinase which, following caspase-cleavage, enters the nucleus and induces chromatin condensation followed by internucleosomal DNA fragmentation. Key component of the Hippo signaling pathway which plays a pivotal role in organ size control and tumor suppression by restricting proliferation and promoting apoptosis. The core of this pathway is composed of a kinase cascade wherein STK3/MST2 and STK4/MST1, in complex with its regulatory protein SAV1, phosphorylates and activates LATS1/2 in complex with its regulatory protein MOB1, which in turn phosphorylates and inactivates YAP1 oncoprotein and WWTR1/TAZ. Phosphorylation of YAP1 by LATS2 inhibits its translocation into the nucleus to regulate cellular genes important for cell proliferation, cell death, and cell migration. STK3/MST2 and STK4/MST1 are required to repress proliferation of mature hepatocytes, to prevent activation of facultative adult liver stem cells (oval cells), and to inhibit tumor formation. Phosphorylates NKX2-1. Phosphorylates NEK2 and plays a role in centrosome disjunction by regulating the localization of NEK2 to centrosomes, and its ability to phosphorylate CROCC and CEP250. In conjunction with SAV1, activates the transcriptional activity of ESR1 through the modulation of its phosphorylation. Positively regulates RAF1 activation via suppression of the inhibitory phosphorylation of RAF1 on 'Ser-259'. Phosphorylates MOBKL1A and RASSF2. Phosphorylates MOBKL1B on 'Thr-74'. Acts cooperatively with MOBKL1B to activate STK38. This chain is Serine/threonine-protein kinase 3 (Stk3), found in Mus musculus (Mouse).